We begin with the raw amino-acid sequence, 205 residues long: Probable GTP-binding protein EngB (205 aa).

The EngB-type G domain maps to 29–203 (QGAEIAFIGR…KAVLSQWFRS (175 aa)). GTP contacts are provided by residues 37 to 44 (GRSNAGKS), 64 to 68 (GRTQM), 82 to 85 (DLPG), 149 to 152 (TKSD), and 182 to 184 (FSS). Positions 44 and 66 each coordinate Mg(2+).

This sequence belongs to the TRAFAC class TrmE-Era-EngA-EngB-Septin-like GTPase superfamily. EngB GTPase family. It depends on Mg(2+) as a cofactor.

Necessary for normal cell division and for the maintenance of normal septation. The protein is Probable GTP-binding protein EngB of Coxiella burnetii (strain RSA 493 / Nine Mile phase I).